Reading from the N-terminus, the 396-residue chain is Phosphoglycerate kinase (396 aa).

Substrate-binding positions include 21–23 (DLN), R36, 59–62 (HFGR), R118, and R151. ATP-binding positions include K201, E323, and 353–356 (GGDT).

It belongs to the phosphoglycerate kinase family. As to quaternary structure, monomer.

Its subcellular location is the cytoplasm. It carries out the reaction (2R)-3-phosphoglycerate + ATP = (2R)-3-phospho-glyceroyl phosphate + ADP. The protein operates within carbohydrate degradation; glycolysis; pyruvate from D-glyceraldehyde 3-phosphate: step 2/5. The chain is Phosphoglycerate kinase from Brucella abortus biovar 1 (strain 9-941).